A 301-amino-acid chain; its full sequence is Isonocardicin synthase (301 aa).

As to quaternary structure, monomer.

The enzyme catalyses nocardicin G + S-adenosyl-L-methionine = isonocardicin C + S-methyl-5'-thioadenosine + H(+). It catalyses the reaction nocardicin E + S-adenosyl-L-methionine = isonocardicin A + S-methyl-5'-thioadenosine + H(+). It participates in antibiotic biosynthesis. Functionally, involved in the biosynthesis of the beta-lactam antibiotic nocardicin A. In the presence of S-adenosyl-L-methionine (AdoMet), catalyzes the transfer of a 3-amino-3-carboxypropyl group from AdoMet to nocardicin G, forming isonocardicin C. Can also catalyze the transformation of nocardicin E and F to isonocardicin A and B, respectively, but in vivo substrate is probably nocardicin G. The protein is Isonocardicin synthase of Nocardia uniformis subsp. tsuyamanensis.